Here is a 573-residue protein sequence, read N- to C-terminus: Sterol esterase 1 (573 aa).

Over 1–12 (MGVSAVLKRARN) the chain is Cytoplasmic. An intramembrane segment occupies 13 to 33 (LLATFIVCCFMAVVLVLALAH). Residues 34–573 (HFINEHRDTR…TELEMVAEKA (540 aa)) lie on the Cytoplasmic side of the membrane. Ser315 functions as the Nucleophile in the catalytic mechanism. Active-site charge relay system residues include Asp489 and His520.

This sequence belongs to the AB hydrolase superfamily. Post-translationally, not N-glycosylated.

It is found in the lipid droplet. It localises to the membrane. The enzyme catalyses a sterol ester + H2O = a sterol + a fatty acid + H(+). In terms of biological role, mediates the hydrolysis of steryl esters, thereby playing a central role in lipid metabolism. Under heme-deficient conditions, it constitutes the major steryl ester hydrolase, suggesting that it plays a central role in mobilization of steryl esters under anaerobic conditions. The sequence is that of Sterol esterase 1 (YEH1) from Saccharomyces cerevisiae (strain ATCC 204508 / S288c) (Baker's yeast).